A 560-amino-acid polypeptide reads, in one-letter code: DNA ligase B (560 aa).

The N6-AMP-lysine intermediate role is filled by lysine 124.

It belongs to the NAD-dependent DNA ligase family. LigB subfamily.

The catalysed reaction is NAD(+) + (deoxyribonucleotide)n-3'-hydroxyl + 5'-phospho-(deoxyribonucleotide)m = (deoxyribonucleotide)n+m + AMP + beta-nicotinamide D-nucleotide.. Catalyzes the formation of phosphodiester linkages between 5'-phosphoryl and 3'-hydroxyl groups in double-stranded DNA using NAD as a coenzyme and as the energy source for the reaction. The sequence is that of DNA ligase B from Escherichia coli O139:H28 (strain E24377A / ETEC).